Here is a 179-residue protein sequence, read N- to C-terminus: Crossover junction endodeoxyribonuclease RuvC (179 aa).

Catalysis depends on residues Asp-7 and Glu-67. The Mn(2+) site is built by Asp-7 and Glu-67. Residues Asp-68–Gln-74 carry the DNA-binding loop motif. Catalysis depends on residues His-139 and Asp-142. His-139 contacts Mn(2+).

It belongs to the RuvC family. As to quaternary structure, homodimer which binds Holliday junction (HJ) DNA. The HJ becomes 2-fold symmetrical on binding to RuvC with unstacked arms; it has a different conformation from HJ DNA in complex with RuvA. In the full resolvosome a probable DNA-RuvA(4)-RuvB(12)-RuvC(2) complex forms which resolves the HJ. It depends on Mn(2+) as a cofactor.

It is found in the cytoplasm. It carries out the reaction Endonucleolytic cleavage at a junction such as a reciprocal single-stranded crossover between two homologous DNA duplexes (Holliday junction).. The RuvA-RuvB-RuvC complex processes Holliday junction (HJ) DNA during genetic recombination and DNA repair. Endonuclease that resolves HJ intermediates. Cleaves cruciform DNA by making single-stranded nicks across the HJ at symmetrical positions within the homologous arms, probably yielding a 5'-phosphate and a 3'-hydroxyl group; requires a central core of homology in the junction. The consensus cleavage sequence is 5'-(G/C)TC(C/G)-3' (a different site than E.coli); cleavage occurs on the 3'-side of the TC dinucleotide at the point of strand exchange. Also resolves nicked HJ intermediates, replication forks and Y-junction DNA in vitro. HJ branch migration catalyzed by RuvA-RuvB allows RuvC to scan DNA until it finds its consensus sequence, where it cleaves and resolves the cruciform DNA. Functionally, binds HJ DNA independently of homologous core or consensus sequence; Mn(2+) is not essential for binding but improves it, while &gt;1.0 mM Mg(2+) inhibit binding. Also binds Y-junction DNA less well. Requires a homologous core to cleave DNA. Another study shows divalent cations (Mn(2+), Mg(2+) and Ca(2+), tested up to 5.0 mM) improve DNA binding considerably over binding in their absence. This Deinococcus radiodurans (strain ATCC 13939 / DSM 20539 / JCM 16871 / CCUG 27074 / LMG 4051 / NBRC 15346 / NCIMB 9279 / VKM B-1422 / R1) protein is Crossover junction endodeoxyribonuclease RuvC.